Reading from the N-terminus, the 445-residue chain is Exodeoxyribonuclease 7 large subunit (445 aa).

Belongs to the XseA family. In terms of assembly, heterooligomer composed of large and small subunits.

The protein resides in the cytoplasm. It carries out the reaction Exonucleolytic cleavage in either 5'- to 3'- or 3'- to 5'-direction to yield nucleoside 5'-phosphates.. Its function is as follows. Bidirectionally degrades single-stranded DNA into large acid-insoluble oligonucleotides, which are then degraded further into small acid-soluble oligonucleotides. The chain is Exodeoxyribonuclease 7 large subunit from Staphylococcus aureus (strain bovine RF122 / ET3-1).